Consider the following 213-residue polypeptide: Nicolin-1 (213 aa).

Part of the neuronal tubulin polyglutamylase complex which contains TPGS1, TPGS2, TTLL1, LRRC49 and NICN1. High expression level is found in brain, testis, liver and kidney. Weak expression in spleen, leukocytes, small intestine and colon.

It is found in the nucleus. This is Nicolin-1 (NICN1) from Homo sapiens (Human).